A 55-amino-acid polypeptide reads, in one-letter code: Large ribosomal subunit protein bL33 (55 aa).

Belongs to the bacterial ribosomal protein bL33 family.

The protein is Large ribosomal subunit protein bL33 of Blochmanniella pennsylvanica (strain BPEN).